The sequence spans 133 residues: P2Y purinoceptor 2 (133 aa).

The Cytoplasmic portion of the chain corresponds to Ile1 to Arg26. A helical transmembrane segment spans residues Val27–Thr47. Over Thr48 to Ser74 the chain is Extracellular. A helical transmembrane segment spans residues Val75–Met95. Residues Ala96–Lys116 lie on the Cytoplasmic side of the membrane. Residues Ser117 to Leu133 form a helical membrane-spanning segment.

This sequence belongs to the G-protein coupled receptor 1 family.

The protein localises to the cell membrane. Its function is as follows. Receptor for ATP and UTP coupled to G-proteins that activate a phosphatidylinositol-calcium second messenger system. The protein is P2Y purinoceptor 2 (P2RY2) of Bos taurus (Bovine).